A 1481-amino-acid chain; its full sequence is Cystic fibrosis transmembrane conductance regulator (1481 aa).

The Cytoplasmic portion of the chain corresponds to 1–77 (MQKSPLVKAS…KLINALRRCF (77 aa)). A helical transmembrane segment spans residues 78-98 (LWRFIFYGILLYLGEVTKAVQ). Residues 81–365 (FIFYGILLYL…GAVQTWYDSL (285 aa)) enclose the ABC transmembrane type-1 1 domain. Residues 99–122 (PLLLGRIIASYDPDNKEERSIAIY) lie on the Extracellular side of the membrane. Residues 123–146 (LAIGLCLLFIVRTLLLHPAIFGLQ) form a helical membrane-spanning segment. Residues 147-195 (HIGMQMRIAMFSLIYKKTLKLSSRVLDKISIGQLVSLLSNNLNKFDEGL) are Cytoplasmic-facing. Residues 196-216 (ALAHFVWIAPLQVTLLMGLLW) traverse the membrane as a helical segment. Residues 217-222 (DLLQAS) lie on the Extracellular side of the membrane. The helical transmembrane segment at 223–243 (AFCGLAVLIVLALFQAWLGKM) threads the bilayer. The Cytoplasmic portion of the chain corresponds to 244–298 (MMKYRDQRAGKINERLVITSEMIENIQSVKAYCWEEAMEKMIENLRQTELKLTRK). The helical transmembrane segment at 299-319 (AAYMRYFNSAAFFFSGFFVVF) threads the bilayer. Over 320–339 (LSVLPYAFLQGIILRKIFTT) the chain is Extracellular. A helical transmembrane segment spans residues 340 to 358 (ISFCIVLRMAITRQFPGAV). The Cytoplasmic segment spans residues 359–859 (QTWYDSLGAI…YLRYITVHKS (501 aa)). ATP is bound by residues tryptophan 401, serine 435, 459 to 466 (GSTGAGKT), and glutamine 494. The ABC transporter 1 domain maps to 424–647 (NGDNKLFFSN…RPDFSSKLMG (224 aa)). Cysteine 525 is lipidated: S-palmitoyl cysteine. A Phosphoserine modification is found at serine 550. The disordered R region stretch occupies residues 655-832 (SAERRNSILT…EEINEEDLKE (178 aa)). Serine 661 and serine 671 each carry phosphoserine; by PKA. Serine 687 is subject to Phosphoserine; by PKC. Lysine 689 is covalently cross-linked (Glycyl lysine isopeptide (Lys-Gly) (interchain with G-Cter in ubiquitin)). 2 positions are modified to phosphoserine; by PKA: serine 701 and serine 713. Phosphothreonine is present on threonine 718. A phosphoserine; by PKA mark is found at serine 738, serine 769, serine 796, and serine 814. The helical transmembrane segment at 860 to 880 (LILVLIWCLIIFLAEVAASLV) threads the bilayer. An ABC transmembrane type-1 2 domain is found at 860–1156 (LILVLIWCLI…AVNSSIDVDS (297 aa)). The Extracellular portion of the chain corresponds to 881–919 (VLWLLKNNTPQQEMNSTQSGNRSYPVIITNTSFYYIFYI). Asparagine 895 and asparagine 901 each carry an N-linked (GlcNAc...) asparagine glycan. Residues 920-940 (YVGVADTLLALGLFRGLPLVH) traverse the membrane as a discontinuously helical segment. The Cytoplasmic segment spans residues 941-991 (TLITVSKILHHKMLRSVLQAPMSTLNALKAGGILNRFSKDIAILDDLLPLT). Residues 992–1012 (IFDFIQLLLIVIGAIAVVSVL) traverse the membrane as a helical segment. Over 1013 to 1014 (QP) the chain is Extracellular. A helical membrane pass occupies residues 1015-1035 (YIFLATVPVIAAFIMLRAYFL). Topologically, residues 1036-1096 (HTSQQLKQLE…TANWFLYLST (61 aa)) are cytoplasmic. A helical transmembrane segment spans residues 1097 to 1117 (LRWFQMRIEMIFVIFFIAVTF). Over 1118 to 1131 (ISILTTGEGQGSVG) the chain is Extracellular. Residues 1132 to 1152 (IILTLAMNIMSTLQWAVNSSI) traverse the membrane as a helical segment. At 1153 to 1481 (DVDSLMRSVS…TEEEVQETRL (329 aa)) the chain is on the cytoplasmic side. Residues 1211-1444 (MIVKDLTAKY…KSLFRQAISS (234 aa)) enclose the ABC transporter 2 domain. Residues tyrosine 1220 and 1245 to 1252 (GRTGSGKS) contribute to the ATP site. Residues 1387–1481 (RTIKQAFADC…TEEEVQETRL (95 aa)) form an interaction with GORASP2 region. Residue cysteine 1396 is the site of S-palmitoyl cysteine attachment. 2 positions are modified to phosphoserine: serine 1445 and serine 1457. Residues 1453-1462 (HRNSSKHKSR) are compositionally biased toward basic residues. The segment at 1453–1481 (HRNSSKHKSRSQITALKEETEEEVQETRL) is disordered. Acidic residues predominate over residues 1471–1481 (ETEEEVQETRL). A PDZ-binding motif is present at residues 1479 to 1481 (TRL).

Belongs to the ABC transporter superfamily. ABCC family. CFTR transporter (TC 3.A.1.202) subfamily. In terms of assembly, monomer; does not require oligomerization for channel activity. May form oligomers in the membrane. Interacts with SLC26A3, SLC26A6 and NHERF1. Interacts with SHANK2. Interacts with MYO6. Interacts (via C-terminus) with GOPC (via PDZ domain); this promotes CFTR internalization and thereby decreases channel activity. Interacts with SLC4A7 through NHERF1. Found in a complex with MYO5B and RAB11A. Interacts with ANO1. Interacts with SLC26A8. Interacts with AHCYL1; the interaction increases CFTR activity. Interacts with CSE1L. The core-glycosylated form interacts with GORASP2 (via PDZ GRASP-type 1 domain) in respone to ER stress. Interacts with MARCHF2; the interaction leads to CFTR ubiqtuitination and degradation. Interacts with ADGRG2. Post-translationally, N-glycosylated. Phosphorylated; cAMP treatment promotes phosphorylation and activates the channel. Dephosphorylation decreases the ATPase activity (in vitro). Phosphorylation at PKA sites activates the channel. Phosphorylation at PKC sites enhances the response to phosphorylation by PKA. Phosphorylated by AMPK; this inhibits channel activity. In terms of processing, ubiquitinated, leading to its degradation in the lysosome. Deubiquitination by USP10 in early endosomes enhances its endocytic recycling to the cell membrane. Ubiquitinated by RNF185 during ER stress. Ubiquitinated by MARCHF2.

The protein resides in the apical cell membrane. It localises to the early endosome membrane. It is found in the cell membrane. The protein localises to the recycling endosome membrane. Its subcellular location is the endoplasmic reticulum membrane. The protein resides in the nucleus. It carries out the reaction ATP + H2O + closed Cl(-) channel = ADP + phosphate + open Cl(-) channel.. The catalysed reaction is chloride(in) = chloride(out). The enzyme catalyses hydrogencarbonate(in) = hydrogencarbonate(out). It catalyses the reaction ATP + H2O = ADP + phosphate + H(+). Its function is as follows. Epithelial ion channel that plays an important role in the regulation of epithelial ion and water transport and fluid homeostasis. Mediates the transport of chloride ions across the cell membrane. Possesses an intrinsic ATPase activity and utilizes ATP to gate its channel; the passive flow of anions through the channel is gated by cycles of ATP binding and hydrolysis by the ATP-binding domains. The ion channel is also permeable to HCO(3)(-); selectivity depends on the extracellular chloride concentration. Exerts its function also by modulating the activity of other ion channels and transporters. Contributes to the regulation of the pH and the ion content of the epithelial fluid layer. Modulates the activity of the epithelial sodium channel (ENaC) complex, in part by regulating the cell surface expression of the ENaC complex. May regulate bicarbonate secretion and salvage in epithelial cells by regulating the transporter SLC4A7. Can inhibit the chloride channel activity of ANO1. Plays a role in the chloride and bicarbonate homeostasis during sperm epididymal maturation and capacitation. This is Cystic fibrosis transmembrane conductance regulator from Cavia porcellus (Guinea pig).